The following is a 309-amino-acid chain: Foldase protein PrsA (309 aa).

The signal sequence occupies residues 1–22 (MKTRSKLAAGFLTLMSVATLAA). Cys23 carries N-palmitoyl cysteine lipidation. Cys23 is lipidated: S-diacylglycerol cysteine. A PpiC domain is found at 146 to 241 (TPETSVQVIK…TSYYIIKVTD (96 aa)).

This sequence belongs to the PrsA family.

Its subcellular location is the cell membrane. It catalyses the reaction [protein]-peptidylproline (omega=180) = [protein]-peptidylproline (omega=0). In terms of biological role, plays a major role in protein secretion by helping the post-translocational extracellular folding of several secreted proteins. The protein is Foldase protein PrsA of Streptococcus agalactiae serotype III (strain NEM316).